We begin with the raw amino-acid sequence, 336 residues long: NADH-quinone oxidoreductase subunit H (336 aa).

8 helical membrane passes run 4-24 (YILW…LVVA), 75-95 (YLFF…WAVI), 108-128 (LGLL…VIAG), 154-174 (MGFA…TGII), 181-201 (LWHW…IAGI), 233-253 (LFFL…SIMF), 272-292 (FVPG…MFLW), and 308-328 (LGWK…ACMV).

It belongs to the complex I subunit 1 family. In terms of assembly, NDH-1 is composed of 14 different subunits. Subunits NuoA, H, J, K, L, M, N constitute the membrane sector of the complex.

The protein localises to the cell inner membrane. It carries out the reaction a quinone + NADH + 5 H(+)(in) = a quinol + NAD(+) + 4 H(+)(out). In terms of biological role, NDH-1 shuttles electrons from NADH, via FMN and iron-sulfur (Fe-S) centers, to quinones in the respiratory chain. The immediate electron acceptor for the enzyme in this species is believed to be ubiquinone. Couples the redox reaction to proton translocation (for every two electrons transferred, four hydrogen ions are translocated across the cytoplasmic membrane), and thus conserves the redox energy in a proton gradient. This subunit may bind ubiquinone. This is NADH-quinone oxidoreductase subunit H from Francisella philomiragia subsp. philomiragia (strain ATCC 25017 / CCUG 19701 / FSC 153 / O#319-036).